The sequence spans 350 residues: Phosphotriesterase-related protein (350 aa).

A divalent metal cation contacts are provided by H22, H24, E169, H201, H230, and D298.

It belongs to the metallo-dependent hydrolases superfamily. Phosphotriesterase family. The cofactor is a divalent metal cation.

This chain is Phosphotriesterase-related protein, found in Drosophila erecta (Fruit fly).